The following is a 157-amino-acid chain: 6,7-dimethyl-8-ribityllumazine synthase (157 aa).

5-amino-6-(D-ribitylamino)uracil contacts are provided by residues phenylalanine 30, alanine 64–glutamate 66, and cysteine 88–isoleucine 90. Glutamate 93–threonine 94 is a (2S)-2-hydroxy-3-oxobutyl phosphate binding site. The Proton donor role is filled by histidine 96. Asparagine 121 is a binding site for 5-amino-6-(D-ribitylamino)uracil. Residue arginine 135 coordinates (2S)-2-hydroxy-3-oxobutyl phosphate.

It belongs to the DMRL synthase family.

It catalyses the reaction (2S)-2-hydroxy-3-oxobutyl phosphate + 5-amino-6-(D-ribitylamino)uracil = 6,7-dimethyl-8-(1-D-ribityl)lumazine + phosphate + 2 H2O + H(+). It participates in cofactor biosynthesis; riboflavin biosynthesis; riboflavin from 2-hydroxy-3-oxobutyl phosphate and 5-amino-6-(D-ribitylamino)uracil: step 1/2. Catalyzes the formation of 6,7-dimethyl-8-ribityllumazine by condensation of 5-amino-6-(D-ribitylamino)uracil with 3,4-dihydroxy-2-butanone 4-phosphate. This is the penultimate step in the biosynthesis of riboflavin. The polypeptide is 6,7-dimethyl-8-ribityllumazine synthase (Albidiferax ferrireducens (strain ATCC BAA-621 / DSM 15236 / T118) (Rhodoferax ferrireducens)).